We begin with the raw amino-acid sequence, 279 residues long: Bifunctional protein FolD (279 aa).

NADP(+)-binding positions include 162–164, serine 187, and isoleucine 228; that span reads GRS.

Belongs to the tetrahydrofolate dehydrogenase/cyclohydrolase family. As to quaternary structure, homodimer.

It carries out the reaction (6R)-5,10-methylene-5,6,7,8-tetrahydrofolate + NADP(+) = (6R)-5,10-methenyltetrahydrofolate + NADPH. The enzyme catalyses (6R)-5,10-methenyltetrahydrofolate + H2O = (6R)-10-formyltetrahydrofolate + H(+). It functions in the pathway one-carbon metabolism; tetrahydrofolate interconversion. Catalyzes the oxidation of 5,10-methylenetetrahydrofolate to 5,10-methenyltetrahydrofolate and then the hydrolysis of 5,10-methenyltetrahydrofolate to 10-formyltetrahydrofolate. The sequence is that of Bifunctional protein FolD from Acidiphilium cryptum (strain JF-5).